A 1117-amino-acid chain; its full sequence is Guanylate cyclase D (1117 aa).

The N-terminal stretch at 1 to 66 (MAGLQQGCHF…ADSLSLLAWA (66 aa)) is a signal peptide. The Extracellular portion of the chain corresponds to 67–479 (RETFTLGVLG…CIRGVQPLGS (413 aa)). An intrachain disulfide couples C121 to C149. The helical transmembrane segment at 480–500 (LLTLTIACVLALVGGFLAYFI) threads the bilayer. At 501–1117 (RLGLQQLRLL…RKSGEAGPGP (617 aa)) the chain is on the cytoplasmic side. The disordered stretch occupies residues 529 to 557 (TPSRRRPHVDSGSESRSVVDGGSPRSVTQ). Positions 541–812 (SESRSVVDGG…PSLDQIYTQF (272 aa)) constitute a Protein kinase domain. An interaction with NCALD region spans residues 874–915 (MGTTVEPEYFDQVTIYFSDIVGFTTISALSEPIEVVGFLNDL). In terms of domain architecture, Guanylate cyclase spans 887–1017 (TIYFSDIVGF…DTVNTASRME (131 aa)). The interval 1096 to 1117 (GFAKARQGLAEPRKSGEAGPGP) is disordered.

This sequence belongs to the adenylyl cyclase class-4/guanylyl cyclase family. As to quaternary structure, interacts (via the catalytic domain) with NCALD. Found in a subset of olfactory neurons in the main olfactory epithelium.

The protein localises to the cell projection. Its subcellular location is the cilium membrane. The catalysed reaction is GTP = 3',5'-cyclic GMP + diphosphate. With respect to regulation, activated by Ca(2+). Its function is as follows. Functions as an olfactory receptor activated by urine odorants, uroguanylin and guanylin and as well by the volatile semiochemicals carbon disulfide (CS2) and carbon dioxide (CO2). Has guanylate cyclase activity upon binding of the ligand. Activation of GUCY2D neurons leads to the cGMP-dependent activation of the CNGA3 channels, membrane depolarization and an increase in action potential frequency. Signaling pathways activated by GUCY2D may trigger social behaviors such as acquisition of food preference. The sequence is that of Guanylate cyclase D from Mus musculus (Mouse).